The chain runs to 316 residues: MKVLWVALVITLLAGCQAEVEPEPEPEVQLGREWPRWQGSQPWEQALGRFWDYLRWVQTLSDQVQEELLSTQVIQELTVLMDETMKEVKAYREELEGQLGPIAQETQARVSKELQAAQARLASDMEDVRSRVAQYRSEVQALMGQTTDELRGRLASHLRKLRKRLLRDAEDLQKRLVVYRAGALEGSERSVSAIRERLGPLVEQGRVRAATVGTLASQTLRERAEAWHQKLRGRMEEMGTQARDHLEEMREQLEEVRAKVEEQGSQMRLQAEAFQARLKSWFEPLVEDMQRQWAGLVEKVQLAMATGPTSAPIENN.

Positions Met1–Ala18 are cleaved as a signal peptide. Tandem repeats lie at residues Val79–Gly100, Pro101–Ala122, Ser123–Gly144, Gln145–Leu166, Arg167–Glu188, Arg189–Ala210, Thr211–Arg232, and Gly233–Glu254. Residues Val79 to Glu254 are 8 X 22 AA approximate tandem repeats. Residues His157–Arg167 form an LDL and other lipoprotein receptors binding region. Heparin is bound at residue Leu161–Arg164. The interval Ala209–Met289 is lipid-binding and lipoprotein association. His228 to Met235 contacts heparin. The tract at residues Ser265–Asn316 is homooligomerization. The tract at residues Arg277–Met289 is specificity for association with VLDL.

The protein belongs to the apolipoprotein A1/A4/E family. In terms of assembly, homotetramer. May interact with ABCA1; functionally associated with ABCA1 in the biogenesis of HDLs. May interact with APP/A4 amyloid-beta peptide; the interaction is extremely stable in vitro but its physiological significance is unclear. May interact with MAPT. May interact with MAP2. In the cerebrospinal fluid, interacts with secreted SORL1. Interacts with PMEL; this allows the loading of PMEL luminal fragment on ILVs to induce fibril nucleation. APOE exists as multiple glycosylated and sialylated glycoforms within cells and in plasma. The extent of glycosylation and sialylation are tissue and context specific. In terms of processing, glycated in plasma VLDL. Post-translationally, phosphorylated by FAM20C in the extracellular medium.

The protein resides in the secreted. It localises to the extracellular space. Its subcellular location is the extracellular matrix. The protein localises to the extracellular vesicle. It is found in the endosome. The protein resides in the multivesicular body. Its function is as follows. APOE is an apolipoprotein, a protein associating with lipid particles, that mainly functions in lipoprotein-mediated lipid transport between organs via the plasma and interstitial fluids. APOE is a core component of plasma lipoproteins and is involved in their production, conversion and clearance. Apolipoproteins are amphipathic molecules that interact both with lipids of the lipoprotein particle core and the aqueous environment of the plasma. As such, APOE associates with chylomicrons, chylomicron remnants, very low density lipoproteins (VLDL) and intermediate density lipoproteins (IDL) but shows a preferential binding to high-density lipoproteins (HDL). It also binds a wide range of cellular receptors including the LDL receptor/LDLR and the very low-density lipoprotein receptor/VLDLR that mediate the cellular uptake of the APOE-containing lipoprotein particles. Finally, APOE also has a heparin-binding activity and binds heparan-sulfate proteoglycans on the surface of cells, a property that supports the capture and the receptor-mediated uptake of APOE-containing lipoproteins by cells. This is Apolipoprotein E (APOE) from Tursiops truncatus (Atlantic bottle-nosed dolphin).